The sequence spans 183 residues: Maltose O-acetyltransferase (183 aa).

Residue N83 participates in acetyl-CoA binding. H113 serves as the catalytic Proton donor/acceptor. Acetyl-CoA is bound by residues G140, S158, 163 to 164 (TK), R178, and K181.

This sequence belongs to the transferase hexapeptide repeat family. As to quaternary structure, homodimer.

The enzyme catalyses D-maltose + acetyl-CoA = 1-O-acetylmaltose + CoA. Functionally, catalyzes the CoA-dependent transfer of an acetyl group to maltose and other sugars. Acetylates glucose exclusively at the C6 position and maltose at the C6 position of the non-reducing end glucosyl moiety. Is able to acetylate maltooligosaccharides. This is Maltose O-acetyltransferase (maa) from Escherichia coli (strain K12).